A 413-amino-acid polypeptide reads, in one-letter code: MLQRVRKLSLLRELLESGAAGGLLLMACAVLALFVANSPLAEGYFHALHVPFAGLDLLHWINDGLMAIFFLFVGLEIKREFLDGQLSTWANRALPCIAAAGGVVVPGLIYASLNAGSPETLRGWAIPTATDIAFALGVLSLLGSRVPTSLKIFLATLAIVDDLVAVLIIAVFYTAELNTAALMGAALVTLVLLGFNRLKVKRLAPYLVMGVALWWLVLLSGVHATIAGVVLAMTIPLHASKAAPDDATSPLHRLEHALSPWVAFLVVPIFGFANAGLSFAGMTPSVLAEPVTLGVALGLFFGKQIGVFGAAWLAIRLGVARLPVAASWAQLYGVSLLCGIGFTMSLFIGLLAFRDAALQNEVKVGVLVGSLSSALIGATLLSLTKRRLPAVDPSRDHQADATALDDLGREDAR.

Helical transmembrane passes span 15-35 (LESG…ALFV), 57-77 (LLHW…GLEI), 93-113 (ALPC…YASL), 123-143 (GWAI…SLLG), 152-172 (IFLA…IAVF), 175-195 (AELN…LLGF), 211-231 (VALW…GVVL), 261-281 (WVAF…SFAG), 295-315 (VALG…WLAI), 333-353 (GVSL…LLAF), and 364-384 (VGVL…LSLT).

It belongs to the NhaA Na(+)/H(+) (TC 2.A.33) antiporter family.

It localises to the cell inner membrane. It carries out the reaction Na(+)(in) + 2 H(+)(out) = Na(+)(out) + 2 H(+)(in). Functionally, na(+)/H(+) antiporter that extrudes sodium in exchange for external protons. The sequence is that of Na(+)/H(+) antiporter NhaA from Caulobacter vibrioides (strain ATCC 19089 / CIP 103742 / CB 15) (Caulobacter crescentus).